The following is a 137-amino-acid chain: Large ribosomal subunit protein uL16 (137 aa).

The disordered stretch occupies residues 1–20; the sequence is MLQPKRTKFRKQQKMRNRGL.

Belongs to the universal ribosomal protein uL16 family. As to quaternary structure, part of the 50S ribosomal subunit.

Functionally, binds 23S rRNA and is also seen to make contacts with the A and possibly P site tRNAs. In Francisella philomiragia subsp. philomiragia (strain ATCC 25017 / CCUG 19701 / FSC 153 / O#319-036), this protein is Large ribosomal subunit protein uL16.